Here is an 805-residue protein sequence, read N- to C-terminus: Polycystin-2-like protein 1 (805 aa).

Positions 1–59 are disordered; it reads MNAVGSPEGQELQKLGSGAWDNPAYSGPPSPHGTLRVCTISSTGPLQPQPKKPEDEPQE. At 1–103 the chain is on the cytoplasmic side; the sequence is MNAVGSPEGQ…ELYIKTTLRE (103 aa). Cysteine 38 is lipidated: S-palmitoyl cysteine. Residues 104 to 124 form a helical membrane-spanning segment; it reads LLVYIVFLVDICLLTYGMTSS. The Extracellular portion of the chain corresponds to 125 to 356; that stretch reads SAYYYTKVMS…NWDFFIVGCE (232 aa). Residues asparagine 177 and asparagine 207 are each glycosylated (N-linked (GlcNAc...) asparagine). Cysteine 210 and cysteine 223 are disulfide-bonded. Asparagine 241 carries N-linked (GlcNAc...) asparagine glycosylation. A helical transmembrane segment spans residues 357–376; sequence VIFCVFIFYYVVEEILELHI. Ca(2+) contacts are provided by glutamate 370 and glutamate 373. Over 377-384 the chain is Cytoplasmic; that stretch reads HRLRYLSS. A helical transmembrane segment spans residues 385 to 405; that stretch reads IWNILDLVVILLSIVAVGFHI. Ca(2+) is bound by residues asparagine 387 and aspartate 390. Over 406–433 the chain is Extracellular; sequence FRTLEVNRLMGKLLQQPNTYADFEFLAF. The chain crosses the membrane as a helical span at residues 434–454; it reads WQTQYNNMNAVNLFFAWIKIF. Residues 455-479 are Cytoplasmic-facing; sequence KYISFNKTMTQLSSTLARCAKDILG. Residues 480 to 499 form a helical membrane-spanning segment; the sequence is FAVMFFIVFFAYAQLGYLLF. The Extracellular segment spans residues 500–511; the sequence is GTQVENFSTFIK. A glycan (N-linked (GlcNAc...) asparagine) is linked at asparagine 505. An intramembrane region (pore-forming) is located at residues 512–526; that stretch reads CIFTQFRIILGDFDY. The Extracellular segment spans residues 527 to 536; it reads NAIDNANRIL. A helical transmembrane segment spans residues 537–557; that stretch reads GPAYFVTYVFFVFFVLLNMFL. Residues 558–805 are Cytoplasmic-facing; that stretch reads AIINDTYSEV…RGEIPTLQRS (248 aa). One can recognise an EF-hand domain in the interval 633-668; the sequence is HEITELTATFTKFDRDGNRILDEKEQEKMRQDLEEE. Coiled-coil stretches lie at residues 650 to 686 and 700 to 740; these read NRILDEKEQEKMRQDLEEERVALNTEIEKLGRSIVSS and GWVS…MLER. Residues 704–763 are required for homooligomerization; that stretch reads GEEFYMLTRRVLQLETVLEGVVSQIDAVGSKLKMLERKGWLAPSPGVKEQAIWKHPQPAP. A disordered region spans residues 759–805; sequence PQPAPAVTPDPWGVQGGQESEVPYKREEEALEERRLSRGEIPTLQRS. A compositionally biased stretch (basic and acidic residues) spans 780–796; the sequence is VPYKREEEALEERRLSR.

Belongs to the polycystin family. Oligomer. Functional PKD2L1 homotetramer can be formed either through C-terminal trimerization followed by N-terminal dimerization of a fourth subunit with a subunit in the trimer or through dimerization followed by trimerization. Heterotetramer with either PKD1L1, PKD1L3 or PKD1; the heterotetrameric complex contains three PKD1L2 chains plus one chain from another family member. Interacts with PKD1L1, forming a ciliary calcium channel. Interacts with PKD1L3, forming a cation channel that is activated by low extracellular pH. Interacts with PKD1; this heteromeric functional cation channels is opened by hypo-osmotic stimulation. Interacts with RACK1; inhibits the channel activity possibly by impairing localization to the cell membrane. Palmitoylation is important for expression at the cell membrane and for channel activity. Detected in taste bud cells in fungiform papillae (at protein level). Ubiquitous. Expressed in adult heart, skeletal muscle, brain, spleen, testis, retina and liver. Isoform 4 appears to be expressed only in transformed lymphoblasts.

It is found in the cell projection. It localises to the cilium membrane. The protein resides in the cell membrane. Its subcellular location is the cytoplasmic vesicle. It carries out the reaction Ca(2+)(in) = Ca(2+)(out). The catalysed reaction is Na(+)(in) = Na(+)(out). It catalyses the reaction K(+)(in) = K(+)(out). The enzyme catalyses Mg(2+)(in) = Mg(2+)(out). With respect to regulation, the non-selective cation channel is gated following an off-response property by acid: gated open after the removal of acid stimulus, but not during acid application. Channel activity is inhibited by phosphatidylinositol-4,5-bisphosphate (PIP2). Non-selective cation channel activity is substantially increased when either the extracellular or intracellular calcium-ion concentration is raised. Regulation of non-selective cation channel activity by external calcium is bimodal, first sensitizing and subsequently inactivating the current. Its function is as follows. Homotetrameric, non-selective cation channel that is permeable to sodium, potassium, magnesium and calcium. Also forms functionnal heteromeric channels with PKD1, PKD1L1 and PKD1L3. Pore-forming subunit of a heterotetrameric, non-selective cation channel, formed by PKD1L2 and PKD1L3, that is permeable to sodium, potassium, magnesium and calcium and which may act as a sour taste receptor in gustatory cells; however, its contribution to sour taste perception is unclear in vivo and may be indirect. The homomeric and heteromeric channels formed by PKD1L2 and PKD1L3 are activated by low pH and Ca(2+), but opens only when the extracellular pH rises again and after the removal of acid stimulus. Pore-forming subunit of a calcium-permeant ion channel formed by PKD1L2 and PKD1L1 in primary cilia, where it controls cilium calcium concentration, without affecting cytoplasmic calcium concentration, and regulates sonic hedgehog/SHH signaling and GLI2 transcription. The PKD1L1:PKD2L1 complex channel is mechanosensitive only at high pressures and is highly temperature sensitive. Pore-forming subunit of a calcium-permeant ion channel formed by PKD1L2 and PKD1 that produces a transient increase in intracellular calcium concentration upon hypo-osmotic stimulation (200 mOsm). May play a role in the perception of carbonation taste. May play a role in the sensory perception of water, via a mechanism that activates the channel in response to dilution of salivary bicarbonate and changes in salivary pH. The chain is Polycystin-2-like protein 1 from Homo sapiens (Human).